The following is a 340-amino-acid chain: Protein-tyrosine-phosphatase PTP1 (340 aa).

Residues 58–326 (IAHEFTGLQA…FFCYNAIVDE (269 aa)) form the Tyrosine-protein phosphatase domain. Substrate is bound by residues aspartate 234, 265 to 271 (CSAGIGR), and glutamine 311. Catalysis depends on cysteine 265, which acts as the Phosphocysteine intermediate.

In terms of assembly, interacts with MPK6. Interacts with KIN10. Post-translationally, phosphorylated by KIN10. As to expression, expressed in roots, stems and flowers, and at low levels in leaves.

Its subcellular location is the cytoplasm. It is found in the cytosol. The protein localises to the nucleus. The catalysed reaction is O-phospho-L-tyrosyl-[protein] + H2O = L-tyrosyl-[protein] + phosphate. Its activity is regulated as follows. Inhibited by hydrogen peroxide. In terms of biological role, protein-tyrosine-phosphatase that dephosphorylates and probably inhibits MPK6 in non-oxidative stress conditions. In association with MKP1, represses salicylic acid (SA) and camalexin biosynthesis, thus modulating defense response. May also repress MPK3. Dephosphorylates and inactivates MPK4 in vitro. In Arabidopsis thaliana (Mouse-ear cress), this protein is Protein-tyrosine-phosphatase PTP1 (PTP1).